Reading from the N-terminus, the 284-residue chain is RAD52 motif-containing protein 1 (284 aa).

Residues 1 to 92 (MAELVPFAVP…KQLFQKSPVK (92 aa)) are necessary for nuclear localization and for nucleolar accumulation in response to heat shock. The RRM domain maps to 15-98 (KTLLVWELSS…SPVKVRLGTR (84 aa)). Residues 90-133 (PVKVRLGTRHKAVQHQALALNSSRCQELANYYFGFNGWSKRIIK) form a necessary for nuclear and nucleolar localization region.

As to quaternary structure, homodimer.

It localises to the nucleus. It is found in the cytoplasm. Its subcellular location is the nucleolus. The protein resides in the cajal body. The protein localises to the PML body. In terms of biological role, may confer resistance to the antitumor agent cisplatin. Binds to DNA and RNA. In Macaca fascicularis (Crab-eating macaque), this protein is RAD52 motif-containing protein 1 (RDM1).